The sequence spans 262 residues: Biotin carboxyl carrier protein of acetyl-CoA carboxylase, chloroplastic (262 aa).

The N-terminal 47 residues, methionine 1–alanine 47, are a transit peptide targeting the chloroplast. Disordered stretches follow at residues alanine 53–serine 84 and isoleucine 125–leucine 185. Positions proline 132–threonine 160 are enriched in pro residues. A compositionally biased stretch (low complexity) spans proline 161–leucine 185. Positions leucine 185 to glutamine 261 constitute a Biotinyl-binding domain. N6-biotinyllysine is present on lysine 227.

Its subcellular location is the plastid. The protein localises to the chloroplast. Its pathway is lipid metabolism; fatty acid biosynthesis. Its function is as follows. This protein is a component of the acetyl coenzyme A carboxylase complex; first, biotin carboxylase catalyzes the carboxylation of the carrier protein and then the transcarboxylase transfers the carboxyl group to form malonyl-CoA. In Glycine max (Soybean), this protein is Biotin carboxyl carrier protein of acetyl-CoA carboxylase, chloroplastic (ACCB-1).